We begin with the raw amino-acid sequence, 211 residues long: Glutathione S-transferase class-mu 28 kDa isozyme (211 aa).

The region spanning 4 to 86 (DHIKVIYFNG…YMAKKHHMMG (83 aa)) is the GST N-terminal domain. Glutathione is bound by residues tyrosine 10, arginine 16, tryptophan 41, lysine 45, leucine 53, glutamate 70, serine 71, and aspartate 104. In terms of domain architecture, GST C-terminal spans 88–211 (TEEEYYNVEK…YLSDRAATPF (124 aa)).

The protein belongs to the GST superfamily. Mu family. Homodimer.

It carries out the reaction RX + glutathione = an S-substituted glutathione + a halide anion + H(+). Functionally, conjugation of reduced glutathione to a wide number of exogenous and endogenous hydrophobic electrophiles. In terms of biological role, GST isoenzymes appear to play a central role in the parasite detoxification system. Other functions are also suspected including a role in increasing the solubility of haematin in the parasite gut. This chain is Glutathione S-transferase class-mu 28 kDa isozyme, found in Schistosoma haematobium (Blood fluke).